The chain runs to 149 residues: Peptide deformylase (149 aa).

Positions 92 and 134 each coordinate Fe cation. The active site involves Glu135. His138 contacts Fe cation.

The protein belongs to the polypeptide deformylase family. Requires Fe(2+) as cofactor.

It carries out the reaction N-terminal N-formyl-L-methionyl-[peptide] + H2O = N-terminal L-methionyl-[peptide] + formate. Its function is as follows. Removes the formyl group from the N-terminal Met of newly synthesized proteins. Requires at least a dipeptide for an efficient rate of reaction. N-terminal L-methionine is a prerequisite for activity but the enzyme has broad specificity at other positions. The chain is Peptide deformylase from Buchnera aphidicola subsp. Cinara cedri (strain Cc).